Reading from the N-terminus, the 417-residue chain is Exodeoxyribonuclease 7 large subunit (417 aa).

Belongs to the XseA family. Heterooligomer composed of large and small subunits.

Its subcellular location is the cytoplasm. The enzyme catalyses Exonucleolytic cleavage in either 5'- to 3'- or 3'- to 5'-direction to yield nucleoside 5'-phosphates.. In terms of biological role, bidirectionally degrades single-stranded DNA into large acid-insoluble oligonucleotides, which are then degraded further into small acid-soluble oligonucleotides. The sequence is that of Exodeoxyribonuclease 7 large subunit from Lactococcus lactis subsp. cremoris (strain MG1363).